A 1485-amino-acid polypeptide reads, in one-letter code: Putative E3 ubiquitin-protein ligase LIN-2 (1485 aa).

Residues 337-353 (EENEDDSDSELDNESVD) show a composition bias toward acidic residues. Disordered regions lie at residues 337–363 (EENE…IFSP), 384–450 (NQIP…ISNA), and 462–507 (RKND…KLSM). The segment covering 438–450 (SSPDISIDNISNA) has biased composition (low complexity). The span at 466–484 (SQTPSMNQDNENSLVLNDS) shows a compositional bias: polar residues. The U-box domain occupies 510–585 (KPPKDFVCPI…TSWKEQNPEL (76 aa)). WD repeat units lie at residues 1194-1232 (SCKE…KVCD), 1246-1283 (EHTK…IKCI), 1409-1448 (SLST…RVAS), and 1454-1485 (GHTK…WALD).

It catalyses the reaction S-ubiquitinyl-[E2 ubiquitin-conjugating enzyme]-L-cysteine + [acceptor protein]-L-lysine = [E2 ubiquitin-conjugating enzyme]-L-cysteine + N(6)-ubiquitinyl-[acceptor protein]-L-lysine.. It functions in the pathway protein modification; protein ubiquitination. Functionally, putative E3 ubiquitin-protein ligase involved in the rhizobial infection process. Plays an important role in the early steps of infection thread formation and in growth and differentiation of nodules. In Lotus japonicus (Lotus corniculatus var. japonicus), this protein is Putative E3 ubiquitin-protein ligase LIN-2.